We begin with the raw amino-acid sequence, 266 residues long: Undecaprenyl-diphosphatase (266 aa).

Helical transmembrane passes span 4–24, 39–59, 86–106, 112–132, 145–165, 182–202, 210–230, and 246–266; these read ILSA…PISS, LSII…IIYY, LKLI…GTFI, MFTL…ILML, ILLA…PGIS, KSAF…AILL, IFMV…FVVG, and LYYF…FVRI.

It belongs to the UppP family.

The protein resides in the cell inner membrane. It carries out the reaction di-trans,octa-cis-undecaprenyl diphosphate + H2O = di-trans,octa-cis-undecaprenyl phosphate + phosphate + H(+). Its function is as follows. Catalyzes the dephosphorylation of undecaprenyl diphosphate (UPP). Confers resistance to bacitracin. This chain is Undecaprenyl-diphosphatase, found in Borreliella burgdorferi (strain ATCC 35210 / DSM 4680 / CIP 102532 / B31) (Borrelia burgdorferi).